The primary structure comprises 146 residues: uncharacterized protein (146 aa).

The next 5 helical transmembrane spans lie at 5 to 27 (GAMV…YGLA), 32 to 49 (FVYV…YIIL), 61 to 80 (LAVM…FFSG), 90 to 108 (SLGL…ARVF), and 120 to 142 (FFLK…MLFL).

The protein resides in the cell membrane. This is an uncharacterized protein from Archaeoglobus fulgidus (strain ATCC 49558 / DSM 4304 / JCM 9628 / NBRC 100126 / VC-16).